The following is a 446-amino-acid chain: White-opaque regulator 2 (446 aa).

Polar residues predominate over residues 1-24; the sequence is MTQLPSVSELINRTGSIGSSSNIT. A disordered region spans residues 1–203; that stretch reads MTQLPSVSEL…QPNFPYHNNF (203 aa). Residues 30–64 show a composition bias toward low complexity; it reads TTTSATNTTTAATATTVTSTTPRSENSYSPNSPYS. Over residues 67 to 86 the composition is skewed to polar residues; the sequence is TRPSNTSLTNYSAGSGITVA. Low complexity-rich tracts occupy residues 87 to 97 and 104 to 120; these read SSSFQFSQPSP and STSSQSSSGDSFQQHQS. Residues 121–144 are compositionally biased toward polar residues; that stretch reads NPSGVSMSSNTSPRTSIVQSMSSV. The span at 166–184 shows a compositional bias: pro residues; that stretch reads VQPPPQQQQLQQPPPPPPQ. The segment covering 185-195 has biased composition (low complexity); that stretch reads QQQHIYPQQQP. Positions 305–332 form a DNA-binding region, zn(2)-C6 fungal-type; it reads CLTCRKRRIKCDERKPTCFNCERSKKSC. Positions 336 to 402 are disordered; it reads QDLSKLPPRK…SGSSTNSRNL (67 aa). Over residues 358–369 the composition is skewed to low complexity; that stretch reads NQQQQQQQQNQQ. Residues 387-401 are compositionally biased toward polar residues; that stretch reads HQITSISGSSTNSRN.

The protein localises to the nucleus. Transcriptional regulator of the switch between 2 heritable states, the white and opaque states. These 2 cell types differ in many characteristics, including cell structure, mating competence, and virulence. Each state is heritable for many generations, and switching between states occurs stochastically, at low frequency. WOR2 is necessary for the stability of the opaque state phenotypic switching from the white to the opaque phase is a necessary step for mating. Plays a role in cell adhesion and pseudohyphal growth. The polypeptide is White-opaque regulator 2 (WOR2) (Candida albicans (strain SC5314 / ATCC MYA-2876) (Yeast)).